A 269-amino-acid polypeptide reads, in one-letter code: Eukaryotic translation initiation factor 3 subunit G-1 (269 aa).

The RRM domain maps to 188–266; it reads AAIRISNLSE…LILSVEWSKP (79 aa).

It belongs to the eIF-3 subunit G family. As to quaternary structure, component of the eukaryotic translation initiation factor 3 (eIF-3) complex. The eIF-3 complex interacts with pix.

The protein localises to the cytoplasm. Its function is as follows. RNA-binding component of the eukaryotic translation initiation factor 3 (eIF-3) complex, which is involved in protein synthesis of a specialized repertoire of mRNAs and, together with other initiation factors, stimulates binding of mRNA and methionyl-tRNAi to the 40S ribosome. The eIF-3 complex specifically targets and initiates translation of a subset of mRNAs involved in cell proliferation. This subunit can bind 18S rRNA. The polypeptide is Eukaryotic translation initiation factor 3 subunit G-1 (Drosophila erecta (Fruit fly)).